A 485-amino-acid chain; its full sequence is Threonine synthase-like 2 (485 aa).

Position 113 is an N6-(pyridoxal phosphate)lysine (Lys113).

The protein belongs to the threonine synthase family. Pyridoxal 5'-phosphate serves as cofactor.

Its function is as follows. Acts as a catabolic phospho-lyase on both gamma- and beta-phosphorylated substrates. Degrades O-phospho-threonine (PThr) to alpha-ketobutyrate, ammonia and phosphate. The chain is Threonine synthase-like 2 (Thnsl2) from Rattus norvegicus (Rat).